A 402-amino-acid polypeptide reads, in one-letter code: Endo-polygalacturonase (402 aa).

The signal sequence occupies residues 1–23; the sequence is MEYQSGKRVLSLSLGLIGLFSAS. Asp249 functions as the Proton donor in the catalytic mechanism. His277 is a catalytic residue.

This sequence belongs to the glycosyl hydrolase 28 family. As to quaternary structure, monomer.

Its subcellular location is the secreted. It catalyses the reaction (1,4-alpha-D-galacturonosyl)n+m + H2O = (1,4-alpha-D-galacturonosyl)n + (1,4-alpha-D-galacturonosyl)m.. In terms of biological role, involved in maceration and soft-rotting of plant tissue. The sequence is that of Endo-polygalacturonase (peh) from Pectobacterium carotovorum subsp. carotovorum (Erwinia carotovora subsp. carotovora).